A 113-amino-acid polypeptide reads, in one-letter code: UPF0145 protein MTH_544 (113 aa).

This sequence belongs to the UPF0145 family.

This is UPF0145 protein MTH_544 from Methanothermobacter thermautotrophicus (strain ATCC 29096 / DSM 1053 / JCM 10044 / NBRC 100330 / Delta H) (Methanobacterium thermoautotrophicum).